A 293-amino-acid polypeptide reads, in one-letter code: MEITFQKVEHRYQYKTPFERRALYDVDVSFPSGGYYAIIGHTGSGKSTMIQHLNGLLQPTNGTVQIGEHLISAGKKEKKLKPLRKKVGVVFQFPEHQLFEETVEKDICFGPTNFGVSVDEARQKARKAIELVGLEPELLTRSPFELSGGQMRRVAIAGVLAMEPEVLVLDEPTAGLDPKGQNELMEMFYKLHKEKGLTVILVTHNMEDAAQYAEQIVVMHKGTVFLQGSAEEVFSHADELEKIGVDLPMSLKYKRAIEEKFGISIPKATLSLEDLTHEVVQVLRKGGHESCSS.

The ABC transporter domain occupies 3-246 (ITFQKVEHRY…ADELEKIGVD (244 aa)). 40–47 (GHTGSGKS) is a binding site for ATP.

Belongs to the ABC transporter superfamily. Energy-coupling factor EcfA family. As to quaternary structure, forms a stable energy-coupling factor (ECF) transporter complex composed of 2 membrane-embedded substrate-binding proteins (S component), 2 ATP-binding proteins (A component) and 2 transmembrane proteins (T component).

The protein localises to the cell membrane. In terms of biological role, ATP-binding (A) component of a common energy-coupling factor (ECF) ABC-transporter complex. Unlike classic ABC transporters this ECF transporter provides the energy necessary to transport a number of different substrates. The polypeptide is Energy-coupling factor transporter ATP-binding protein EcfA2 (Bacillus cereus (strain ATCC 14579 / DSM 31 / CCUG 7414 / JCM 2152 / NBRC 15305 / NCIMB 9373 / NCTC 2599 / NRRL B-3711)).